We begin with the raw amino-acid sequence, 471 residues long: Ribulose bisphosphate carboxylase large chain 2 (471 aa).

Substrate-binding residues include Asn-116 and Thr-166. Lys-168 functions as the Proton acceptor in the catalytic mechanism. Residue Lys-170 participates in substrate binding. Residues Lys-194, Asp-196, and Glu-197 each contribute to the Mg(2+) site. Residue Lys-194 is modified to N6-carboxylysine. The active-site Proton acceptor is the His-287. Substrate contacts are provided by Arg-288, His-320, and Ser-372.

Belongs to the RuBisCO large chain family. Type I subfamily. In terms of assembly, heterohexadecamer of 8 large chains and 8 small chains; disulfide-linked. The disulfide link is formed within the large subunit homodimers. It depends on Mg(2+) as a cofactor. The disulfide bond which can form in the large chain dimeric partners within the hexadecamer appears to be associated with oxidative stress and protein turnover.

The catalysed reaction is 2 (2R)-3-phosphoglycerate + 2 H(+) = D-ribulose 1,5-bisphosphate + CO2 + H2O. The enzyme catalyses D-ribulose 1,5-bisphosphate + O2 = 2-phosphoglycolate + (2R)-3-phosphoglycerate + 2 H(+). In terms of biological role, ruBisCO catalyzes two reactions: the carboxylation of D-ribulose 1,5-bisphosphate, the primary event in carbon dioxide fixation, as well as the oxidative fragmentation of the pentose substrate. Both reactions occur simultaneously and in competition at the same active site. The polypeptide is Ribulose bisphosphate carboxylase large chain 2 (Allochromatium vinosum (strain ATCC 17899 / DSM 180 / NBRC 103801 / NCIMB 10441 / D) (Chromatium vinosum)).